We begin with the raw amino-acid sequence, 95 residues long: Ribonuclease kappa (95 aa).

Helical transmembrane passes span 12–32 and 68–88; these read GLIISVWGIVQLVLMGLFFYI and CWIAACIYVLTLLLSAQQFYM.

The protein belongs to the RNase K family.

It is found in the membrane. Endoribonuclease. Functionally, (Microbial infection) Required for the initial stages of clathrin-mediated endocytic uptake of a diverse set of flaviviruses, including dengue and West Nile. Not required for clathrin-mediated endocytosis and macropinocytosis. The chain is Ribonuclease kappa from Drosophila melanogaster (Fruit fly).